Here is a 150-residue protein sequence, read N- to C-terminus: CGGCEAGSAGKDAFHLRVRVHPFHVLRINKMLSCAGADRLQTGMRGAFGKPQGVCARVAIGQVLLSVRCKDGNANHAQEALRRAKFKFPRRQKIIVSRKWGFTKFSRTDYLKYKSENRIVPDGVNAKLLGCHGRLAARQPGRAFLEAVGN.

This sequence belongs to the universal ribosomal protein uL16 family. In terms of assembly, component of the small ribosomal subunit. Mature ribosomes consist of a small (40S) and a large (60S) subunit. The 40S subunit contains about 33 different proteins and 1 molecule of RNA (18S). The 60S subunit contains about 49 different proteins and 3 molecules of RNA (25S, 5.8S and 5S).

This Nicotiana tabacum (Common tobacco) protein is Large ribosomal subunit protein uL16 (RPL10).